The following is a 359-amino-acid chain: Fructose-bisphosphate aldolase, cytoplasmic isozyme (359 aa).

Substrate is bound by residues Arg-52 and Lys-142. The active-site Proton acceptor is the Glu-184. Lys-226 serves as the catalytic Schiff-base intermediate with dihydroxyacetone-P.

The protein belongs to the class I fructose-bisphosphate aldolase family.

It is found in the cytoplasm. It catalyses the reaction beta-D-fructose 1,6-bisphosphate = D-glyceraldehyde 3-phosphate + dihydroxyacetone phosphate. It functions in the pathway carbohydrate degradation; glycolysis; D-glyceraldehyde 3-phosphate and glycerone phosphate from D-glucose: step 4/4. This chain is Fructose-bisphosphate aldolase, cytoplasmic isozyme (ALDC), found in Cicer arietinum (Chickpea).